The following is a 740-amino-acid chain: Alpha-1,6-mannosylglycoprotein 6-beta-N-acetylglucosaminyltransferase A (740 aa).

Topologically, residues 1–13 (MAFFSPWKLSSQK) are cytoplasmic. Residues 14–30 (LGFFLVTFGFIWGMMLL) form a helical; Signal-anchor for type II membrane protein membrane-spanning segment. The Lumenal segment spans residues 31–740 (HFTIQQRTQP…GQVALCKDCL (710 aa)). N-linked (GlcNAc...) asparagine glycans are attached at residues N109, N114, and N117. 9 disulfides stabilise this stretch: C144–C182, C155–C195, C171–C337, C371–C625, C648–C723, C652–C725, C659–C712, C680–C701, and C736–C739. The interval 212 to 740 (NSLAEIRTDF…GQVALCKDCL (529 aa)) is sufficient for catalytic activity. N333 carries an N-linked (GlcNAc...) asparagine glycan. Residue 377-378 (DS) coordinates substrate. N-linked (GlcNAc...) asparagine glycans are attached at residues N432 and N446. E525 provides a ligand contact to UDP-N-acetyl-alpha-D-glucosamine. Residue K553 coordinates substrate.

It belongs to the glycosyltransferase 18 family. N-glycosylated. In terms of processing, a secreted form is released from the membrane after cleavage by gamma-secretase. As to expression, detected in cerebellum.

The protein localises to the golgi apparatus membrane. It localises to the perikaryon. The protein resides in the secreted. The enzyme catalyses N(4)-{beta-D-GlcNAc-(1-&gt;2)-[beta-D-GlcNAc-(1-&gt;4)]-alpha-D-Man-(1-&gt;3)-[beta-D-GlcNAc-(1-&gt;2)-alpha-D-Man-(1-&gt;6)]-beta-D-Man-(1-&gt;4)-beta-D-GlcNAc-(1-&gt;4)-beta-D-GlcNAc}-L-asparaginyl-[protein] + UDP-N-acetyl-alpha-D-glucosamine = N(4)-{beta-D-GlcNAc-(1-&gt;2)-[beta-D-GlcNAc-(1-&gt;4)]-alpha-D-Man-(1-&gt;3)-[beta-D-GlcNAc-(1-&gt;2)-[beta-D-GlcNAc-(1-&gt;6)]-alpha-D-Man-(1-&gt;6)]-beta-D-Man-(1-&gt;4)-beta-D-GlcNAc-(1-&gt;4)-beta-D-GlcNAc}-L-asparaginyl-[protein] + UDP + H(+). The protein operates within protein modification; protein glycosylation. In terms of biological role, catalyzes the addition of N-acetylglucosamine (GlcNAc) in beta 1-6 linkage to the alpha-linked mannose of biantennary N-linked oligosaccharides. Catalyzes an important step in the biosynthesis of branched, complex-type N-glycans, such as those found on EGFR, TGFR (TGF-beta receptor) and CDH2. Via its role in the biosynthesis of complex N-glycans, plays an important role in the activation of cellular signaling pathways, reorganization of the actin cytoskeleton, cell-cell adhesion and cell migration. MGAT5-dependent EGFR N-glycosylation enhances the interaction between EGFR and LGALS3 and thereby prevents rapid EGFR endocytosis and prolongs EGFR signaling. Required for efficient interaction between TGFB1 and its receptor. Enhances activation of intracellular signaling pathways by several types of growth factors, including FGF2, PDGF, IGF, TGFB1 and EGF. MGAT5-dependent CDH2 N-glycosylation inhibits CDH2-mediated homotypic cell-cell adhesion and contributes to the regulation of downstream signaling pathways. Promotes cell migration. Contributes to the regulation of the inflammatory response. MGAT5-dependent TCR N-glycosylation enhances the interaction between TCR and LGALS3, limits agonist-induced TCR clustering, and thereby dampens TCR-mediated responses to antigens. Required for normal leukocyte evasation and accumulation at sites of inflammation. Inhibits attachment of monocytes to the vascular endothelium and subsequent monocyte diapedesis. Functionally, promotes proliferation of umbilical vein endothelial cells and angiogenesis, at least in part by promoting the release of the growth factor FGF2 from the extracellular matrix. This Mus musculus (Mouse) protein is Alpha-1,6-mannosylglycoprotein 6-beta-N-acetylglucosaminyltransferase A (Mgat5).